A 697-amino-acid chain; its full sequence is MMEKSLNTVTSLPLRVIYCIDRASAIRCLAKSQHAVPIQVLKEVEPKKVICQVDIQHVIQTVCRCSPELSCKSQGDFSVYFLDHTEPDELFVGLGYWSSLLLSPTLNAGTSNSDTVWVNGFIVEFGIQRSIEIKLRFQSLQNSFEVGTPETHTSSKFLSSTLPPSLIFDPSSSEKSDSISGSLFDTNYTCPVNINGLSKQKSVRELKSPSRPSALAETNVEELELDSLFHASNDISCSATSFSEPYILDHQAALDHPATDPVCSASSTTVNSAVSTKKRRRESSTISPESAYVAAQLQNPSEREQVHEFIKEQVRIARGRIEKKFTNVRGKNRIEEQLTLSLQEGKIPPYCQNCGTIKTANWRNATYMNITLMLCNACGIYWTSRRSMRPRNLWSTYKAFETEKPLENDAFAQLELAVYKLSQQRKLSISIFRELENAGRHSPLNRLTSLDSTHSAPDPNHISKPSVVNQQKSRGGPRTAKLKNDLRRIQSSPIVAPTPDTSFREPLSEIGSNDSWLVLPNSLSANIQNDVLRKTDFMCTDKENVAFPLKTTTKPMPKVNKEETEPTLPVCDSEKENDDLECYFRTPPKPTTLQKQQQSPSPWRSELFLSDPDQNVLTPRHKPKFDLSKALSSVAKSNNIENSPQLPERYDFSLELGLNSQLDNEERRDIPLMTDLVMPSSPPMVPADRHLSVENTC.

Residues C351 to C378 form a GATA-type; atypical zinc finger. Residues P443–N484 are disordered. Residues N445–S455 show a composition bias toward polar residues.

As to quaternary structure, interacts with CENP-A.

It localises to the nucleus. It is found in the chromosome. The protein localises to the centromere. In terms of biological role, required for proper chromosome segregation via regulation of CENP-A localization to the centromere. This is CENP-A multicopy suppressor protein 2 (ams2) from Schizosaccharomyces pombe (strain 972 / ATCC 24843) (Fission yeast).